The primary structure comprises 429 residues: Enolase (429 aa).

Residue Gln-167 participates in (2R)-2-phosphoglycerate binding. Residue Glu-209 is the Proton donor of the active site. Mg(2+) contacts are provided by Asp-246, Glu-289, and Asp-316. Positions 341, 370, 371, and 392 each coordinate (2R)-2-phosphoglycerate. The Proton acceptor role is filled by Lys-341.

This sequence belongs to the enolase family. As to quaternary structure, component of the RNA degradosome, a multiprotein complex involved in RNA processing and mRNA degradation. It depends on Mg(2+) as a cofactor.

It is found in the cytoplasm. It localises to the secreted. The protein resides in the cell surface. It carries out the reaction (2R)-2-phosphoglycerate = phosphoenolpyruvate + H2O. The protein operates within carbohydrate degradation; glycolysis; pyruvate from D-glyceraldehyde 3-phosphate: step 4/5. In terms of biological role, catalyzes the reversible conversion of 2-phosphoglycerate (2-PG) into phosphoenolpyruvate (PEP). It is essential for the degradation of carbohydrates via glycolysis. The sequence is that of Enolase from Pseudomonas aeruginosa (strain LESB58).